A 126-amino-acid polypeptide reads, in one-letter code: Precursor of CEP2 (126 aa).

A signal peptide spans 1–19; the sequence is MKLFIITVVTILTISRVFD. The propeptide occupies 20–80; sequence KTPATTEARK…ENNLKNRFIN (61 aa). Residues Pro84 and Pro87 each carry the hydroxyproline modification. A propeptide spanning residues 96 to 105 is cleaved from the precursor; it reads PRVLNNKFTN. 3 positions are modified to hydroxyproline: Pro109, Pro112, and Pro116. Residues 121-126 constitute a propeptide that is removed on maturation; it reads PGVVNV.

The protein belongs to the C-terminally encoded plant signaling peptide (CEP) family. In terms of assembly, interacts with CEP receptors (e.g. CEPR1 and CEPR2). Post-translationally, the mature small signaling peptide is generated by proteolytic processing of the longer precursor. Mostly expressed in roots. Present in cotyledons, shoot apical meristem (SAM), leaves, inflorescence stems and flowers.

It localises to the secreted. It is found in the extracellular space. The protein localises to the apoplast. In terms of biological role, extracellular signaling peptide that represses primary root growth rate. Negatively regulates the number of leaves and flowering, and modulates leaf morphology. Regulates systemic nitrogen (N)-demand signaling. Mediates up-regulation of genes involved in N uptake and assimilation pathways. This chain is Precursor of CEP2, found in Arabidopsis thaliana (Mouse-ear cress).